A 308-amino-acid polypeptide reads, in one-letter code: Ycf92-like protein (308 aa).

Helical transmembrane passes span 41–61 (FANN…TLIA), 75–95 (LLTL…GLGV), 153–173 (ISTI…TTAP), 192–212 (IPVT…PLVL), and 288–308 (WLAI…GNQI).

It belongs to the ycf92 family.

Its subcellular location is the membrane. The polypeptide is Ycf92-like protein (Nostoc sp. (strain PCC 7120 / SAG 25.82 / UTEX 2576)).